The sequence spans 171 residues: Envelope protein UL128 (171 aa).

The protein belongs to the HHV-5 UL128 protein family. As to quaternary structure, forms the envelope pentamer complex (PC) composed of gH, gL, UL128, UL130, and UL131A. The pentamer interacts with host NRP2.

Its subcellular location is the virion membrane. Plays a role in viral entry into host cells. Forms a pentameric complex at the surface of the viral envelope together with gH, gL, UL130 and UL131. This complex is required for entry in epithelial, endothelial and myeloid host cells. Mechanistically, engages host receptor(s) including neurophilin 2/NRP2 to mediate infection. Additionally, monomeric UL128 may interfere with certain inflammatory cytokines to increase infection and dissemination by blocking monocytes migration. This is Envelope protein UL128 (UL128) from Human cytomegalovirus (strain Merlin) (HHV-5).